A 332-amino-acid polypeptide reads, in one-letter code: Phosphate acyltransferase (332 aa).

The protein belongs to the PlsX family. As to quaternary structure, homodimer. Probably interacts with PlsY.

The protein resides in the cytoplasm. The enzyme catalyses a fatty acyl-[ACP] + phosphate = an acyl phosphate + holo-[ACP]. It participates in lipid metabolism; phospholipid metabolism. In terms of biological role, catalyzes the reversible formation of acyl-phosphate (acyl-PO(4)) from acyl-[acyl-carrier-protein] (acyl-ACP). This enzyme utilizes acyl-ACP as fatty acyl donor, but not acyl-CoA. The polypeptide is Phosphate acyltransferase (Clostridium novyi (strain NT)).